The sequence spans 222 residues: MAAAGGGAAAAAGRAYSFKVVLLGEGCVGKTSLVLRYCENKFNDKHITTLQASFLTKKLNIGGKRVNLAIWDTAGQERFHALGPIYYRDSNGAILVYDVTDEDSFQKVKNWVKELRKMLGNEICLCIVGNKIDLEKERHVSIQEAESYAESVGAKHYHTSAKQNKGIEELFLDLCKRMIETAQVDERAKGNGSSQAGAARRGVQIIDDEPQAQSSGGCCSSG.

A2 is modified (N-acetylalanine). G26, G29, K30, T31, S32, N43, D44, H46, T48, and T49 together coordinate GTP. A Mg(2+)-binding site is contributed by T31. A Switch 1 motif is present at residues 41 to 54; it reads KFNDKHITTLQASF. T49 and D72 together coordinate Mg(2+). The short motif at 74-92 is the Switch 2 element; that stretch reads AGQERFHALGPIYYRDSNG. G75, N130, K131, D133, A161, and K162 together coordinate GTP. S-geranylgeranyl cysteine attachment occurs at residues C218 and C219. A Cysteine methyl ester modification is found at C219. A propeptide spans 220-222 (removed in mature form); the sequence is SSG.

The protein belongs to the small GTPase superfamily. Rab family. Interacts with the cytoplasmic tail of integrins ITGA1, ITGA2, ITGA5, ITGA6, ITGA11 and ITGB1; this interaction is dependent upon its GDP/GTP cycle. Interacts with RABGEF1 (via VPS9 domain). Interacts with ANKRD27. Interacts with VAMP7. Interacts (in GTP-bound form) with VAMP8 in response to starvation; the interaction probably regulates VAMP8 endolysosomal trafficking. Interacts (active GTP-bound form) with TMED10; the interaction is indirect and regulates TMED10 abundance and localization at the Golgi. It depends on Mg(2+) as a cofactor.

It localises to the endoplasmic reticulum membrane. The protein localises to the golgi apparatus. It is found in the trans-Golgi network. The protein resides in the golgi apparatus membrane. Its subcellular location is the early endosome membrane. It localises to the cytoplasmic vesicle membrane. The protein localises to the cleavage furrow. It is found in the cell projection. The protein resides in the neuron projection. The enzyme catalyses GTP + H2O = GDP + phosphate + H(+). With respect to regulation, regulated by guanine nucleotide exchange factors (GEFs) including ANKRD27 and RABGEF1, which promote the exchange of bound GDP for free GTP. Regulated by GTPase activating proteins (GAPs) which increase the GTP hydrolysis activity. Inhibited by GDP dissociation inhibitors (GDIs). In terms of biological role, the small GTPases Rab are key regulators of intracellular membrane trafficking, from the formation of transport vesicles to their fusion with membranes. Rabs cycle between an inactive GDP-bound form and an active GTP-bound form that is able to recruit to membranes different sets of downstream effectors directly responsible for vesicle formation, movement, tethering and fusion. RAB21 is involved in membrane trafficking control. Regulates integrin internalization and recycling, but does not influence the traffic of endosomally translocated receptors in general. As a result, may regulate cell adhesion and migration. During the mitosis of adherent cells, controls the endosomal trafficking of integrins which is required for the successful completion of cytokinesis. Involved in neurite growth. Following SBF2/MTMT13-mediated activation in response to starvation-induced autophagy, binds to and regulates SNARE protein VAMP8 endolysosomal transport required for SNARE-mediated autophagosome-lysosome fusion. Modulates protein levels of the cargo receptors TMED2 and TMED10, and required for appropriate Golgi localization of TMED10. This chain is Ras-related protein Rab-21, found in Mus musculus (Mouse).